The chain runs to 1127 residues: Nck-associated protein 1-like (1127 aa).

The tract at residues 638–670 (KAKNKKTRKQRQTPRKGEPERDKPGAESHRKNR) is disordered. Over residues 639 to 651 (AKNKKTRKQRQTP) the composition is skewed to basic residues. Basic and acidic residues predominate over residues 652–666 (RKGEPERDKPGAESH). Residues 996-1016 (VACLLLIFLAVSLPLLATDPS) traverse the membrane as a helical segment.

It belongs to the HEM-1/HEM-2 family. As to quaternary structure, in hematopoietic cells, component of the WAVE2 complex composed of ABI1, CYFIP1/SRA1, NCKAP1L/HEM1 and WASF2/WAVE2. Interacts with ARHGAP4, PIK3C3/VPS34 and PPP1R12A/MYPT1. Interacts with mammalian target of rapamycin complex 2 (mTORC2) components, including MTOR and RICTOR. In terms of tissue distribution, expressed only in cells of hematopoietic origin. Expressed in neutrophils (at protein level). Expressed in T-cells (at protein level).

The protein localises to the cell membrane. It localises to the cytoplasm. Essential hematopoietic-specific regulator of the actin cytoskeleton. Controls lymphocyte development, activation, proliferation and homeostasis, erythrocyte membrane stability, as well as phagocytosis and migration by neutrophils and macrophages. Component of the WAVE2 complex which signals downstream of RAC to stimulate F-actin polymerization. Required for stabilization and/or translation of the WAVE2 complex proteins in hematopoietic cells. Within the WAVE2 complex, enables the cortical actin network to restrain excessive degranulation and granule release by T-cells. Required for efficient T-lymphocyte and neutrophil migration. Exhibits complex cycles of activation and inhibition to generate waves of propagating the assembly with actin. Also involved in mechanisms WAVE-independent to regulate myosin and actin polymerization during neutrophil chemotaxis. In T-cells, required for proper mechanistic target of rapamycin complex 2 (mTORC2)-dependent AKT phosphorylation, cell proliferation and cytokine secretion, including that of IL2 and TNF. The sequence is that of Nck-associated protein 1-like from Homo sapiens (Human).